The chain runs to 230 residues: Spliceosome-associated protein CWC15 homolog (230 aa).

Disordered regions lie at residues 1–157 (MTTA…EEKQ) and 164–183 (AGNPLLNDTPAGSSTSGGDF). Positions 25–34 (KLSNQYSSKD) are enriched in polar residues. 2 coiled-coil regions span residues 47–82 (GQETEADLRKKDLRRELEDKERNAIREKRARDSASS) and 119–164 (DSDE…NILA). The segment covering 52–78 (ADLRKKDLRRELEDKERNAIREKRARD) has biased composition (basic and acidic residues). Over residues 104 to 125 (DADEAVDELNSSDDDDSDEDDT) the composition is skewed to acidic residues. Residues 131-157 (ELEKIKKERAEEKAARDEEIKEKEEKQ) show a composition bias toward basic and acidic residues.

The protein belongs to the CWC15 family. Component of spliceosomal complex.

The protein resides in the nucleus. Component of a spliceosomal complex that is required for activating pre-mRNA splicing. The polypeptide is Spliceosome-associated protein CWC15 homolog (Caenorhabditis elegans).